Here is a 504-residue protein sequence, read N- to C-terminus: Aromatic and large neutral amino acid transporter 5-3 (504 aa).

Residues 1 to 24 (MESTEATMVERKAESPSSGDRARS) are disordered. Basic and acidic residues predominate over residues 8-24 (MVERKAESPSSGDRARS). 6 helical membrane-spanning segments follow: residues 76-96 (YVVL…FMNW), 138-158 (HLFT…GIML), 165-185 (FGAL…GFSS), 206-226 (FFPC…IIAV), 233-253 (ISFI…GATF), and 256-276 (VMLG…LFII). Asparagine 310 is a glycosylation site (N-linked (GlcNAc...) asparagine). The next 6 membrane-spanning stretches (helical) occupy residues 324 to 344 (LSFL…LFFA), 356 to 376 (EANQ…GGIA), 381 to 401 (IVPV…LMLI), 406 to 426 (CFAA…SFLV), 436 to 456 (IFYP…GGII), and 475 to 495 (MTVL…FMYV).

This sequence belongs to the SLC43A transporter (TC 2.A.1.44) family.

The protein resides in the cell membrane. It catalyses the reaction L-tyrosine(in) = L-tyrosine(out). L-tyrosine uptake is stimulated in trans by aromatic and large neutral amino acids, but not smaller or charged amino acids. In terms of biological role, L-tyrosine transporter that is essential for parasite survival and virulence. May also act as an aromatic and large neutral amino acid transporter. Does not cotransport other charged ions. Involved in amino acid homeostasis by facilitating the net uptake of L-tyrosine and maintaining intracellular pools of aromatic and large neutral amino acids through exchange. The polypeptide is Aromatic and large neutral amino acid transporter 5-3 (Toxoplasma gondii).